A 244-amino-acid polypeptide reads, in one-letter code: Phosphoadenosine 5'-phosphosulfate reductase (244 aa).

Residue Cys239 is the Nucleophile; cysteine thiosulfonate intermediate of the active site.

It belongs to the PAPS reductase family. CysH subfamily.

It is found in the cytoplasm. The enzyme catalyses [thioredoxin]-disulfide + sulfite + adenosine 3',5'-bisphosphate + 2 H(+) = [thioredoxin]-dithiol + 3'-phosphoadenylyl sulfate. The protein operates within sulfur metabolism; hydrogen sulfide biosynthesis; sulfite from sulfate: step 3/3. In terms of biological role, catalyzes the formation of sulfite from phosphoadenosine 5'-phosphosulfate (PAPS) using thioredoxin as an electron donor. The chain is Phosphoadenosine 5'-phosphosulfate reductase from Salmonella schwarzengrund (strain CVM19633).